The primary structure comprises 247 residues: 14-3-3 protein gamma-A (247 aa).

This sequence belongs to the 14-3-3 family. Homodimer, and heterodimer with other family members.

It localises to the cytoplasm. Functionally, adapter protein implicated in the regulation of a large spectrum of both general and specialized signaling pathways. Binds to a large number of partners, usually by recognition of a phosphoserine or phosphothreonine motif. Binding generally results in the modulation of the activity of the binding partner. This is 14-3-3 protein gamma-A (ywhag-a) from Xenopus laevis (African clawed frog).